Here is a 636-residue protein sequence, read N- to C-terminus: Carbon monoxide dehydrogenase 1 (636 aa).

6 residues coordinate [4Fe-4S] cluster: C38, C46, C47, C50, C55, and C69. [Ni-4Fe-5S] cluster contacts are provided by H262, C297, C335, C448, C478, and C528.

It belongs to the Ni-containing carbon monoxide dehydrogenase family. As to quaternary structure, homodimer. [4Fe-4S] cluster is required as a cofactor. [Ni-4Fe-5S] cluster serves as cofactor.

Its subcellular location is the cytoplasm. The protein localises to the cell membrane. The catalysed reaction is CO + 2 oxidized [2Fe-2S]-[ferredoxin] + H2O = 2 reduced [2Fe-2S]-[ferredoxin] + CO2 + 2 H(+). With respect to regulation, inactivated by O(2). CODH oxidizes carbon monoxide coupled, via CooF, to the reduction of a hydrogen cation by a hydrogenase (possibly CooH). The polypeptide is Carbon monoxide dehydrogenase 1 (cooS1) (Carboxydothermus hydrogenoformans (strain ATCC BAA-161 / DSM 6008 / Z-2901)).